Reading from the N-terminus, the 429-residue chain is Adenylosuccinate synthetase (429 aa).

GTP is bound by residues 12-18 (GDEGKGK) and 40-42 (GHT). Catalysis depends on Asp13, which acts as the Proton acceptor. Asp13 and Gly40 together coordinate Mg(2+). IMP contacts are provided by residues 13–16 (DEGK), 38–41 (NAGH), Thr129, Arg143, Gln223, Thr238, and Arg302. His41 acts as the Proton donor in catalysis. 298 to 304 (TVTGRAR) contacts substrate. GTP contacts are provided by residues Arg304, 330-332 (KLD), and 412-414 (STS).

Belongs to the adenylosuccinate synthetase family. Homodimer. Requires Mg(2+) as cofactor.

Its subcellular location is the cytoplasm. It catalyses the reaction IMP + L-aspartate + GTP = N(6)-(1,2-dicarboxyethyl)-AMP + GDP + phosphate + 2 H(+). The protein operates within purine metabolism; AMP biosynthesis via de novo pathway; AMP from IMP: step 1/2. In terms of biological role, plays an important role in the de novo pathway of purine nucleotide biosynthesis. Catalyzes the first committed step in the biosynthesis of AMP from IMP. The polypeptide is Adenylosuccinate synthetase (Acidiphilium cryptum (strain JF-5)).